Here is a 65-residue protein sequence, read N- to C-terminus: Large ribosomal subunit protein bL31 (65 aa).

Positions 16, 18, 36, and 39 each coordinate Zn(2+).

The protein belongs to the bacterial ribosomal protein bL31 family. Type A subfamily. In terms of assembly, part of the 50S ribosomal subunit. Zn(2+) serves as cofactor.

Functionally, binds the 23S rRNA. In Campylobacter jejuni subsp. doylei (strain ATCC BAA-1458 / RM4099 / 269.97), this protein is Large ribosomal subunit protein bL31.